The chain runs to 257 residues: Putative transcription factor R430 (257 aa).

Disordered stretches follow at residues 1–35 (MEKF…DNNS) and 58–77 (SLKS…PNKS). A compositionally biased stretch (low complexity) spans 7-25 (TDNTTDNTTDNTTDNTTDN). Residues 26–35 (TTDKLTDNNS) show a composition bias toward basic and acidic residues.

Belongs to the nucleo-cytoplasmic large DNA viruses (NCLDVs) VLTF-3 family.

Putative transcription factor. This chain is Putative transcription factor R430, found in Acanthamoeba polyphaga (Amoeba).